The sequence spans 708 residues: ATP-dependent RNA helicase laf-1 (708 aa).

Positions 1-21 are enriched in low complexity; it reads MESNQSNNGGSGNAALNRGGR. The segment at 1 to 191 is disordered; the sequence is MESNQSNNGG…RGTSKWENRG (191 aa). Residues 48–70 are compositionally biased toward gly residues; it reads GAGGGGYRRGGGNSGGGGGGGYD. 2 stretches are compositionally biased toward basic and acidic residues: residues 72–83 and 90–99; these read GYNDNRDDRDNR and GRDRNYEDRG. The segment covering 100-123 has biased composition (gly residues); that stretch reads YNGGGGGGGNRGYNNNRGGGGGGY. The Q motif motif lies at 231–259; the sequence is SLFSDLSLHEWIEENIKTAGYDRPTPVQK. The region spanning 262–453 is the Helicase ATP-binding domain; that stretch reads IPALQGGRDL…QDFLKENYVF (192 aa). An ATP-binding site is contributed by 275–282; sequence AQTGSGKT. A DEAD box motif is present at residues 397 to 400; it reads DEAD. The Helicase C-terminal domain maps to 465-626; that stretch reads NIMQKIVWVE…ELPDWLEGMS (162 aa). The segment at 623–708 is disordered; the sequence is EGMSGDMRSG…RAQPQQDWWS (86 aa). Composition is skewed to gly residues over residues 630-647 and 656-692; these read RSGGGYRGRGGRGNGQRF and GGSGNGGGGNGGGGGFGGGGQRSGGGGGFQSGGGGGR. Polar residues predominate over residues 699–708; that stretch reads RAQPQQDWWS.

The protein belongs to the DEAD box helicase family. DDX3/DED1 subfamily. As to quaternary structure, binds RNA as a monomer at low laf-1 concentrations and as a dimer at high laf-1 concentrations. Expressed in the germline and soma of young adult hermaphrodites.

The protein resides in the cytoplasm. The protein localises to the cytoplasmic granule. Its subcellular location is the nucleus. It is found in the stress granule. It localises to the inflammasome. The protein resides in the cell membrane. The protein localises to the cell projection. Its subcellular location is the lamellipodium. The enzyme catalyses ATP + H2O = ADP + phosphate + H(+). In terms of biological role, multifunctional ATP-dependent RNA helicase. Plays a role in RNA remodeling, but is not required for RNA unwinding. Binds to RNA in a concentration-dependent manner to stimulate annealing between two complementary strands of RNA. This process is also dependent upon ATP; ATP reduces binding to RNA and subsequently diminishes RNA annealing. Involved in many cellular processes, which do not necessarily require its ATPase/helicase catalytic activities. Involved in the regulation of transcription and translation initiation. Involved in innate immunity. Involved in both stress and inflammatory responses. Promotes liquid-liquid phase separation of P granules, which is a process important for intracellular organization and stress granule assembly. Required for embryonic development. Plays a role in sexual cell fate determination by negatively regulating the translation of the sex determining protein tra-2. May play a protective role in the response to heat and oxidative stress. May negatively regulate extrinsic apoptotic signaling pathway via death domain receptors. May be involved in mitotic chromosome segregation. The chain is ATP-dependent RNA helicase laf-1 from Caenorhabditis elegans.